Reading from the N-terminus, the 209-residue chain is Protein-L-isoaspartate O-methyltransferase (209 aa).

Ser59 is a catalytic residue.

The protein belongs to the methyltransferase superfamily. L-isoaspartyl/D-aspartyl protein methyltransferase family.

The protein resides in the cytoplasm. The enzyme catalyses [protein]-L-isoaspartate + S-adenosyl-L-methionine = [protein]-L-isoaspartate alpha-methyl ester + S-adenosyl-L-homocysteine. In terms of biological role, catalyzes the methyl esterification of L-isoaspartyl residues in peptides and proteins that result from spontaneous decomposition of normal L-aspartyl and L-asparaginyl residues. It plays a role in the repair and/or degradation of damaged proteins. This Helicobacter pylori (strain P12) protein is Protein-L-isoaspartate O-methyltransferase.